Consider the following 63-residue polypeptide: uncharacterized protein (63 aa).

A helical membrane pass occupies residues 3 to 23 (IIYIILGFLSLAIGIIGIFPS).

It localises to the membrane. This is an uncharacterized protein from Haemophilus influenzae (strain ATCC 51907 / DSM 11121 / KW20 / Rd).